Consider the following 115-residue polypeptide: U31-theraphotoxin-Cg1a (115 aa).

A signal peptide spans 1–18 (MKLCVIIIASLMVASVSG). The propeptide occupies 19 to 51 (RLRKIKGTELDKKMLLEKLGHGMDIRFEETPRA). 4 cysteine pairs are disulfide-bonded: Cys-52-Cys-67, Cys-60-Cys-73, Cys-64-Cys-113, and Cys-66-Cys-86.

This sequence belongs to the neurotoxin 03 (Tx2) family. 02 subfamily. Expressed by the venom gland.

Its subcellular location is the secreted. In terms of biological role, probable ion channel inhibitor. In Chilobrachys guangxiensis (Chinese earth tiger tarantula), this protein is U31-theraphotoxin-Cg1a.